Reading from the N-terminus, the 90-residue chain is Co-chaperonin GroES (90 aa).

It belongs to the GroES chaperonin family. Heptamer of 7 subunits arranged in a ring. Interacts with the chaperonin GroEL.

It localises to the cytoplasm. Its function is as follows. Together with the chaperonin GroEL, plays an essential role in assisting protein folding. The GroEL-GroES system forms a nano-cage that allows encapsulation of the non-native substrate proteins and provides a physical environment optimized to promote and accelerate protein folding. GroES binds to the apical surface of the GroEL ring, thereby capping the opening of the GroEL channel. This Thermosipho melanesiensis (strain DSM 12029 / CIP 104789 / BI429) protein is Co-chaperonin GroES.